A 433-amino-acid chain; its full sequence is Tyrosine--tRNA ligase (433 aa).

An L-tyrosine-binding site is contributed by tyrosine 34. Residues 39–48 (PTASSLHVGS) carry the 'HIGH' region motif. The L-tyrosine site is built by tyrosine 169 and glutamine 173. The short motif at 229 to 233 (KMGKT) is the 'KMSKS' region element. Lysine 232 is a binding site for ATP. The S4 RNA-binding domain occupies 364-432 (IPAFVLFHTV…RYHTIVVRKG (69 aa)).

Belongs to the class-I aminoacyl-tRNA synthetase family. TyrS type 1 subfamily. As to quaternary structure, homodimer.

The protein resides in the cytoplasm. It catalyses the reaction tRNA(Tyr) + L-tyrosine + ATP = L-tyrosyl-tRNA(Tyr) + AMP + diphosphate + H(+). Functionally, catalyzes the attachment of tyrosine to tRNA(Tyr) in a two-step reaction: tyrosine is first activated by ATP to form Tyr-AMP and then transferred to the acceptor end of tRNA(Tyr). In Desulfosudis oleivorans (strain DSM 6200 / JCM 39069 / Hxd3) (Desulfococcus oleovorans), this protein is Tyrosine--tRNA ligase.